Consider the following 354-residue polypeptide: Sulfate/thiosulfate import ATP-binding protein CysA (354 aa).

The 235-residue stretch at 3–237 folds into the ABC transporter domain; the sequence is IEVRGLSKRF…PATPFVYGFL (235 aa). 35–42 contacts ATP; that stretch reads GPSGCGKT.

This sequence belongs to the ABC transporter superfamily. Sulfate/tungstate importer (TC 3.A.1.6) family. As to quaternary structure, the complex is composed of two ATP-binding proteins (CysA), two transmembrane proteins (CysT and CysW) and a solute-binding protein (CysP).

It localises to the cell inner membrane. It carries out the reaction sulfate(out) + ATP + H2O = sulfate(in) + ADP + phosphate + H(+). The catalysed reaction is thiosulfate(out) + ATP + H2O = thiosulfate(in) + ADP + phosphate + H(+). Functionally, part of the ABC transporter complex CysAWTP involved in sulfate/thiosulfate import. Responsible for energy coupling to the transport system. The sequence is that of Sulfate/thiosulfate import ATP-binding protein CysA from Bordetella pertussis (strain Tohama I / ATCC BAA-589 / NCTC 13251).